The following is a 665-amino-acid chain: mRNA cleavage and polyadenylation factor CLP1 (665 aa).

Residues Lys91 and 195–200 (SAGKTS) contribute to the ATP site. Disordered stretches follow at residues 218–283 (VKEG…SQAK) and 593–615 (PPPR…HDYE). Composition is skewed to basic and acidic residues over residues 219-238 (KEGD…EIHP) and 598-614 (QSKD…HHDY).

This sequence belongs to the Clp1 family. Clp1 subfamily. Component of a pre-mRNA cleavage factor complex. Interacts directly with PCF11.

Its subcellular location is the nucleus. Required for endonucleolytic cleavage during polyadenylation-dependent pre-mRNA 3'-end formation. This chain is mRNA cleavage and polyadenylation factor CLP1, found in Malassezia globosa (strain ATCC MYA-4612 / CBS 7966) (Dandruff-associated fungus).